The chain runs to 432 residues: Putative D-alanyl-D-alanine carboxypeptidase (432 aa).

A helical; Signal-anchor transmembrane segment spans residues 7 to 25 (ATVLLTFSLSAFAVEYPVL).

Belongs to the peptidase S12 family. YfeW subfamily.

The protein localises to the cell inner membrane. It carries out the reaction Preferential cleavage: (Ac)2-L-Lys-D-Ala-|-D-Ala. Also transpeptidation of peptidyl-alanyl moieties that are N-acyl substituents of D-alanine.. In Salmonella agona (strain SL483), this protein is Putative D-alanyl-D-alanine carboxypeptidase.